The sequence spans 504 residues: uncharacterized protein (504 aa).

Disordered stretches follow at residues 1 to 59 (MSSS…KNEY) and 171 to 255 (GVNS…NQRL). Composition is skewed to basic and acidic residues over residues 36-50 (KPID…KEIG) and 199-212 (RAET…ESRQ). The segment covering 213–232 (SNRGNNDNGDQRMTSKATTR) has biased composition (polar residues).

This is an uncharacterized protein from Caenorhabditis elegans.